The following is a 245-amino-acid chain: 1-(5-phosphoribosyl)-5-[(5-phosphoribosylamino)methylideneamino] imidazole-4-carboxamide isomerase (245 aa).

The Proton acceptor role is filled by Asp7. Asp129 acts as the Proton donor in catalysis.

It belongs to the HisA/HisF family.

Its subcellular location is the cytoplasm. It catalyses the reaction 1-(5-phospho-beta-D-ribosyl)-5-[(5-phospho-beta-D-ribosylamino)methylideneamino]imidazole-4-carboxamide = 5-[(5-phospho-1-deoxy-D-ribulos-1-ylimino)methylamino]-1-(5-phospho-beta-D-ribosyl)imidazole-4-carboxamide. It participates in amino-acid biosynthesis; L-histidine biosynthesis; L-histidine from 5-phospho-alpha-D-ribose 1-diphosphate: step 4/9. The protein is 1-(5-phosphoribosyl)-5-[(5-phosphoribosylamino)methylideneamino] imidazole-4-carboxamide isomerase of Erwinia tasmaniensis (strain DSM 17950 / CFBP 7177 / CIP 109463 / NCPPB 4357 / Et1/99).